Here is a 398-residue protein sequence, read N- to C-terminus: Potassium channel subfamily K member 4 (398 aa).

Residues 1–3 lie on the Cytoplasmic side of the membrane; that stretch reads MRS. Residues 4–24 form a helical membrane-spanning segment; that stretch reads TTLLALLALVLLYLVSGALVF. Residues 25 to 88 are Extracellular-facing; the sequence is QALEQPHEQQ…WTNSSNHSSA (64 aa). N-linked (GlcNAc...) asparagine glycosylation is found at Asn-81 and Asn-84. The segment at residues 89-103 is an intramembrane region (helical); the sequence is WNLGSAFFFSGTIIT. Residues Thr-104, Ile-105, Gly-106, and Tyr-107 each coordinate K(+). The tract at residues 104-109 is selectivity filter 1; sequence TIGYGN. Residues 104-110 lie within the membrane without spanning it; it reads TIGYGNI. Topologically, residues 111-118 are extracellular; the sequence is VLHTDAGR. A helical transmembrane segment spans residues 119 to 151; that stretch reads LFCIFYALVGIPLFGMLLAGVGDRLGSSLRRGI. Residues 152–173 lie on the Cytoplasmic side of the membrane; that stretch reads GHIEAIFLKWHVPPGLVRSLSA. Residues 174–195 traverse the membrane as a helical segment; the sequence is VLFLLIGCLLFVLTPTFVFSYM. At 196-200 the chain is on the extracellular side; that stretch reads ESWSK. Residues 201-214 constitute an intramembrane region (helical); sequence LEAIYFVIVTLTTV. The K(+) site is built by Thr-213, Val-214, Gly-215, and Phe-216. A selectivity filter 2 region spans residues 213 to 218; that stretch reads TVGFGD. An intramembrane segment occupies 215–220; that stretch reads GFGDYV. Residues 221–234 are Extracellular-facing; sequence PGDGTGQNSPAYQP. A helical transmembrane segment spans residues 235-261; sequence LVWFWILFGLAYFASVLTTIGNWLRAV. Residues 262-398 lie on the Cytoplasmic side of the membrane; that stretch reads SRRTRAEMGG…GRLRDKAVPV (137 aa). The segment covering 282–292 has biased composition (polar residues); the sequence is TVTARVTQRTG. Residues 282 to 398 form a disordered region; the sequence is TVTARVTQRT…GRLRDKAVPV (117 aa). A compositionally biased stretch (basic residues) spans 370–389; the sequence is PRGRRRPNPSKKPSRPRGPG.

It belongs to the two pore domain potassium channel (TC 1.A.1.8) family. In terms of assembly, homodimer; disulfide-linked. Forms heterodimers with other 2-pore domain K(+) channel subunits, such as KCNK2 and KCNK10. Post-translationally, N-glycosylated. As to expression, expressed in brain, spinal cord and eye. Not detected in heart, skeletal muscle, liver, lungs, kidney and testis.

The protein resides in the cell membrane. The protein localises to the cell projection. It localises to the axon. It carries out the reaction K(+)(in) = K(+)(out). The catalysed reaction is Rb(+)(in) = Rb(+)(out). The enzyme catalyses Cs(+)(in) = Cs(+)(out). Its activity is regulated as follows. Activated by arachidonic acid and other polyunsaturated fatty acids. Not affected by volatile general anesthetics such as chloroform, diethyl ether, halothane and isoflurane. Activated at intracellular and extracellular basic pHs. Its function is as follows. K(+) channel that conducts voltage-dependent outward rectifying currents upon membrane depolarization. Voltage sensing is coupled to K(+) electrochemical gradient in an 'ion flux gating' mode where outward but not inward ion flow opens the gate. Converts to voltage-independent 'leak' conductance mode upon stimulation by various stimuli including mechanical membrane stretch, basic pH, temperature and lipids. Homo- and heterodimerizes to form functional channels with distinct regulatory and gating properties. At trigeminal A-beta afferent nerves, the heterodimer of KCNK2/TREK-1 and KCNK4/TRAAK is mostly coexpressed at nodes of Ranvier where it conducts voltage-independent mechanosensitive and thermosensitive currents, allowing rapid action potential repolarization, high speed and high frequence saltatory conduction on myelinated nerves to ensure prompt sensory responses. Permeable to other monovalent cations such as Rb(+) and Cs(+). In Mus musculus (Mouse), this protein is Potassium channel subfamily K member 4.